The primary structure comprises 326 residues: ATP synthase subunit gamma, mitochondrial (326 aa).

Residues methionine 1 to serine 45 constitute a mitochondrion transit peptide.

This sequence belongs to the ATPase gamma chain family. F-type ATPases have 2 components, CF(1) - the catalytic core - and CF(0) - the membrane proton channel. CF(1) has five subunits: alpha(3), beta(3), gamma(1), delta(1), epsilon(1). CF(0) has three main subunits: a, b and c.

It localises to the mitochondrion. Its subcellular location is the mitochondrion inner membrane. In terms of biological role, mitochondrial membrane ATP synthase (F(1)F(0) ATP synthase or Complex V) produces ATP from ADP in the presence of a proton gradient across the membrane which is generated by electron transport complexes of the respiratory chain. F-type ATPases consist of two structural domains, F(1) - containing the extramembraneous catalytic core, and F(0) - containing the membrane proton channel, linked together by a central stalk and a peripheral stalk. During catalysis, ATP synthesis in the catalytic domain of F(1) is coupled via a rotary mechanism of the central stalk subunits to proton translocation. Part of the complex F(1) domain and the central stalk which is part of the complex rotary element. The gamma subunit protrudes into the catalytic domain formed of alpha(3)beta(3). Rotation of the central stalk against the surrounding alpha(3)beta(3) subunits leads to hydrolysis of ATP in three separate catalytic sites on the beta subunits. In Ipomoea batatas (Sweet potato), this protein is ATP synthase subunit gamma, mitochondrial (ATPC).